We begin with the raw amino-acid sequence, 175 residues long: Nucleoplasmin-3 (175 aa).

An N-acetylalanine modification is found at Ala-2. Position 16 is a phosphoserine (Ser-16). Position 27 is an omega-N-methylarginine (Arg-27). Ser-147 and Ser-151 each carry phosphoserine.

This sequence belongs to the nucleoplasmin family. Interacts with NPM (via N-terminus). Forms a pentamer with NPM at a ratio 4:1 (NPM3/NPM). Two pentamers form a decamer. Post-translationally, phosphorylated. Predominantly expressed in testis.

The protein localises to the nucleus. It localises to the nucleolus. In terms of biological role, plays a role in the regulation of diverse cellular processes such as ribosome biogenesis, chromatin remodeling or protein chaperoning. Modulates the histone chaperone function and the RNA-binding activity of nucleolar phosphoprotein B23/NPM. Efficiently mediates chromatin remodeling when included in a pentamer containing NPM3 and NPM. The sequence is that of Nucleoplasmin-3 (Npm3) from Mus musculus (Mouse).